Reading from the N-terminus, the 205-residue chain is Large ribosomal subunit protein uL4 (205 aa).

This sequence belongs to the universal ribosomal protein uL4 family. Part of the 50S ribosomal subunit.

One of the primary rRNA binding proteins, this protein initially binds near the 5'-end of the 23S rRNA. It is important during the early stages of 50S assembly. It makes multiple contacts with different domains of the 23S rRNA in the assembled 50S subunit and ribosome. Functionally, forms part of the polypeptide exit tunnel. The sequence is that of Large ribosomal subunit protein uL4 from Dinoroseobacter shibae (strain DSM 16493 / NCIMB 14021 / DFL 12).